Reading from the N-terminus, the 128-residue chain is Small ribosomal subunit protein eS8 (128 aa).

Residues 1–31 (MAWYQGNDLRKPTGGKKTRHRKKRKHELGRP) form a disordered region. The span at 13–27 (TGGKKTRHRKKRKHE) shows a compositional bias: basic residues.

It belongs to the eukaryotic ribosomal protein eS8 family. As to quaternary structure, part of the 30S ribosomal subunit.

The polypeptide is Small ribosomal subunit protein eS8 (Staphylothermus marinus (strain ATCC 43588 / DSM 3639 / JCM 9404 / F1)).